A 129-amino-acid polypeptide reads, in one-letter code: Protein BUNDLE SHEATH DEFECTIVE 2, chloroplastic (129 aa).

The N-terminal 43 residues, 1-43 (MAATASLTTTAPSPPALLKASAPLLISFRPVSRHCKNLCIKTK), are a transit peptide targeting the chloroplast. The CR-type zinc-finger motif lies at 49 to 123 (QSAKKHQKVK…AGFLGGFLST (75 aa)). Zn(2+) is bound by residues C62, C65, N68, C73, C76, C97, C100, E105, C108, and C111.

It belongs to the BSD2 chaperone family. Interacts with the RuBisCo large subunit (RbcL) assembled as an intermediate complex made of eight RbcL and eight BSD2 subunits. In terms of tissue distribution, expressed in shoot tissues, in both bundle sheath and mesophyll cells.

The protein resides in the plastid. The protein localises to the chloroplast stroma. In terms of biological role, chloroplast chaperone required for RuBisCo complex biogenesis and translational regulation of the RuBisCo large subunit (RbcL). Stabilizes an end-state assembly intermediate of eight RbcL subunits until the small subunits (RBCSs) become available to produce a complete stable RuBisCo complex containing eight small and eight large subunits. Involved in the differentiation of bundle sheath cells, especially chloroplast structure. The polypeptide is Protein BUNDLE SHEATH DEFECTIVE 2, chloroplastic (Zea mays (Maize)).